The sequence spans 498 residues: MRINPTTSGSGVSTLEKKNLGNITQIIGPVLDIAFPPGKMPNIYNALVVKDRDTVGQQINVTCEVQQLLGNNRVRAVAMSATDGLTRGMEVIDTGAPLSVPVGGTTLGRIFNVLGEPVDNLGPVDTRTTSPIHRSAPAFIQLDTKLSIFETGIKVVDLLAPYRRGGKIGLFGGAGVGKTVLIMELINNIAKAHGGVSVFGGVGERTRGGNDLYMEMKESGVINEQNIAESKVALVYGQMNEPPGARMRVGLTALTMAEYFRDVNEQDVLLFIDNIFRFVQAGSEVSALLGRMPSAVGYQPTLSTEMGTLQERITSTKEGSITSIQAVYVPADDLTDPAPATTFAHLDATTVLSRGLAAKGIYPAVDPLDSTSTMLQPRIVGEEHYETAQRVKQTLQRYKELQDIIAILGLDELSEEDRLTVARARKIERFLSQPFFVAEVFTGSPGKYVGLAETIRGFQLILSGELDGLPEQAFYLVGNIDEATAKAMNLEMESNLKK.

172 to 179 (GGAGVGKT) is an ATP binding site.

It belongs to the ATPase alpha/beta chains family. F-type ATPases have 2 components, CF(1) - the catalytic core - and CF(0) - the membrane proton channel. CF(1) has five subunits: alpha(3), beta(3), gamma(1), delta(1), epsilon(1). CF(0) has four main subunits: a(1), b(1), b'(1) and c(9-12).

Its subcellular location is the plastid. It localises to the chloroplast thylakoid membrane. It carries out the reaction ATP + H2O + 4 H(+)(in) = ADP + phosphate + 5 H(+)(out). Functionally, produces ATP from ADP in the presence of a proton gradient across the membrane. The catalytic sites are hosted primarily by the beta subunits. This is ATP synthase subunit beta, chloroplastic from Panax ginseng (Korean ginseng).